The following is a 242-amino-acid chain: Carboxy-S-adenosyl-L-methionine synthase (242 aa).

S-adenosyl-L-methionine is bound by residues Tyr39, Gly64–Ser66, Asp89–Asn90, Asp117–Ile118, Asn132, and Arg199.

It belongs to the class I-like SAM-binding methyltransferase superfamily. Cx-SAM synthase family. As to quaternary structure, homodimer.

It carries out the reaction prephenate + S-adenosyl-L-methionine = carboxy-S-adenosyl-L-methionine + 3-phenylpyruvate + H2O. Its function is as follows. Catalyzes the conversion of S-adenosyl-L-methionine (SAM) to carboxy-S-adenosyl-L-methionine (Cx-SAM). This Aliivibrio salmonicida (strain LFI1238) (Vibrio salmonicida (strain LFI1238)) protein is Carboxy-S-adenosyl-L-methionine synthase.